We begin with the raw amino-acid sequence, 831 residues long: DNA helicase MCM8 (831 aa).

Positions 1 to 20 (MSQGWRGGSGGWRGGGGGNP) are enriched in gly residues. Residues 1–53 (MSQGWRGGSGGWRGGGGGNPYAGAWRGRPWRGRGQGGTWSRNNGRDPVCFAPP) are disordered. The region spanning 395 to 602 (LFQLIVNSLC…DHDHLLSEHV (208 aa)) is the MCM domain. 447 to 454 (GDPGLGKS) contributes to the ATP binding site.

It belongs to the MCM family. As to quaternary structure, component of the MCM8-MCM9 complex, which forms a hexamer composed of mcm8 and mcm9.

The protein resides in the nucleus. The catalysed reaction is ATP + H2O = ADP + phosphate + H(+). Functionally, component of the MCM8-MCM9 complex, a complex involved in homologous recombination repair following DNA interstrand cross-links and plays a key role during gametogenesis. The MCM8-MCM9 complex probably acts as a hexameric helicase required to process aberrant forks into homologous recombination substrates and to orchestrate homologous recombination with resection, fork stabilization and fork restart. In eggs, required for elongation during DNA replication by facilitating the recruitment of rpa2/rpa34 and stimulating the processivity of DNA polymerases at replication foci. Probably not required for DNA replication in other cells. The chain is DNA helicase MCM8 (mcm8) from Xenopus laevis (African clawed frog).